The primary structure comprises 690 residues: Translation factor GUF1, mitochondrial (690 aa).

The disordered stretch occupies residues 40 to 68 (SVTVPAARRHNSTKSTNSTTSTNSTTATS). Low complexity predominate over residues 52–68 (TKSTNSTTSTNSTTATS). The tr-type G domain maps to 89 to 272 (ERYRNFCIVA…AVIKKMPAPV (184 aa)). GTP-binding positions include 98–105 (AHIDHGKS), 165–169 (DTPGH), and 219–222 (NKID).

Belongs to the TRAFAC class translation factor GTPase superfamily. Classic translation factor GTPase family. LepA subfamily.

Its subcellular location is the mitochondrion inner membrane. It catalyses the reaction GTP + H2O = GDP + phosphate + H(+). In terms of biological role, promotes mitochondrial protein synthesis. May act as a fidelity factor of the translation reaction, by catalyzing a one-codon backward translocation of tRNAs on improperly translocated ribosomes. Binds to mitochondrial ribosomes in a GTP-dependent manner. This Sordaria macrospora (strain ATCC MYA-333 / DSM 997 / K(L3346) / K-hell) protein is Translation factor GUF1, mitochondrial.